The sequence spans 118 residues: Large ribosomal subunit protein bL20 (118 aa).

The protein belongs to the bacterial ribosomal protein bL20 family.

In terms of biological role, binds directly to 23S ribosomal RNA and is necessary for the in vitro assembly process of the 50S ribosomal subunit. It is not involved in the protein synthesizing functions of that subunit. This chain is Large ribosomal subunit protein bL20, found in Thermosipho melanesiensis (strain DSM 12029 / CIP 104789 / BI429).